Reading from the N-terminus, the 466-residue chain is Teichoic acids export ATP-binding protein TagH (466 aa).

Residues 27–249 (NKAKSLIGSN…YEKFVQWFKK (223 aa)) form the ABC transporter domain. 63-70 (GLNGAGKS) is an ATP binding site. The unknown stretch occupies residues 250 to 466 (LPKKEQEKFK…TTEQSDGANQ (217 aa)). Disordered regions lie at residues 356–403 (NMTS…SNQN) and 439–466 (IHPG…GANQ). Residues 373–384 (PKKKVSQAKKTT) are compositionally biased toward basic residues. Residues 385 to 403 (KVSSTQKNTSSSSSTSNQN) show a composition bias toward low complexity. Positions 403–447 (NTYIVQAGDSLSIIAENHGYSVEEIQQVNPGVDFSVIHPGQEINL) constitute a LysM domain. The span at 449–466 (EPTTSANSTTEQSDGANQ) shows a compositional bias: polar residues.

Belongs to the ABC transporter superfamily. Teichoic acids exporter (TC 3.A.1.104.1) family. The complex is composed of two ATP-binding proteins (TagH) and two transmembrane proteins (TagG).

Its subcellular location is the cell membrane. It catalyses the reaction ATP + H2O + teichoic acidSide 1 = ADP + phosphate + teichoic acidSide 2.. Its function is as follows. Part of the ABC transporter complex TagGH involved in teichoic acids export. Responsible for energy coupling to the transport system. This chain is Teichoic acids export ATP-binding protein TagH, found in Lactococcus lactis subsp. lactis (strain IL1403) (Streptococcus lactis).